Consider the following 294-residue polypeptide: uncharacterized protein (294 aa).

3 helical membrane passes run alanine 21 to phenylalanine 41, proline 51 to alanine 71, and isoleucine 77 to phenylalanine 97. The interval histidine 156 to isoleucine 176 is disordered. Residues glutamate 184–serine 215 are a coiled coil. The segment covering glutamine 265–phenylalanine 277 has biased composition (basic and acidic residues). The disordered stretch occupies residues glutamine 265–asparagine 294.

The protein localises to the mitochondrion membrane. This is an uncharacterized protein from Arabidopsis thaliana (Mouse-ear cress).